The following is a 195-amino-acid chain: ATP-dependent Clp protease proteolytic subunit 2 (195 aa).

Ser-98 acts as the Nucleophile in catalysis. The active site involves His-123.

The protein belongs to the peptidase S14 family. In terms of assembly, fourteen ClpP subunits assemble into 2 heptameric rings which stack back to back to give a disk-like structure with a central cavity, resembling the structure of eukaryotic proteasomes.

The protein resides in the cytoplasm. The enzyme catalyses Hydrolysis of proteins to small peptides in the presence of ATP and magnesium. alpha-casein is the usual test substrate. In the absence of ATP, only oligopeptides shorter than five residues are hydrolyzed (such as succinyl-Leu-Tyr-|-NHMec, and Leu-Tyr-Leu-|-Tyr-Trp, in which cleavage of the -Tyr-|-Leu- and -Tyr-|-Trp bonds also occurs).. Functionally, cleaves peptides in various proteins in a process that requires ATP hydrolysis. Has a chymotrypsin-like activity. Plays a major role in the degradation of misfolded proteins. ClpXP2 is involved in the complete degradation of the Site-2 clipped anti-sigma-W factor RsiW. This results in the release of SigW and the transcription activation of the genes under the control of the sigma-W factor. The polypeptide is ATP-dependent Clp protease proteolytic subunit 2 (Shouchella clausii (strain KSM-K16) (Alkalihalobacillus clausii)).